The primary structure comprises 678 residues: Endoplasmic reticulum membrane-associated RNA degradation protein (678 aa).

The next 2 helical transmembrane spans lie at 390 to 410 and 587 to 607; these read LLAF…LSVF and VLSL…AVCG.

Its subcellular location is the endoplasmic reticulum membrane. Functionally, may play a role in neuronal migration during embryonic development. This chain is Endoplasmic reticulum membrane-associated RNA degradation protein (ERMARD), found in Homo sapiens (Human).